A 374-amino-acid chain; its full sequence is Pyruvate dehydrogenase E1 component subunit beta-1, mitochondrial (374 aa).

Residues 1–34 (MLGIARRRLGSGCALGQLMQALRPAAAAAAARTY) constitute a mitochondrion transit peptide. E97 is a binding site for thiamine diphosphate. I150, A198, I199, and D201 together coordinate K(+).

Tetramer of 2 alpha and 2 beta subunits. Requires thiamine diphosphate as cofactor.

It is found in the mitochondrion matrix. It carries out the reaction N(6)-[(R)-lipoyl]-L-lysyl-[protein] + pyruvate + H(+) = N(6)-[(R)-S(8)-acetyldihydrolipoyl]-L-lysyl-[protein] + CO2. In terms of biological role, the pyruvate dehydrogenase complex catalyzes the overall conversion of pyruvate to acetyl-CoA and CO(2). It contains multiple copies of three enzymatic components: pyruvate dehydrogenase (E1), dihydrolipoamide acetyltransferase (E2) and lipoamide dehydrogenase (E3). In Oryza sativa subsp. japonica (Rice), this protein is Pyruvate dehydrogenase E1 component subunit beta-1, mitochondrial.